The primary structure comprises 892 residues: Zinc finger protein 512B (892 aa).

Positions 1–82 (MTDPFCVGGR…KKGRPKAENQ (82 aa)) are disordered. Positions 8–19 (GGRRLPGSSKSG) are enriched in low complexity. The segment at 105–129 (VKCPNSGCWLEFPSIYGLKYHYQRC) adopts a C2H2-type 1; atypical zinc-finger fold. The C2H2-type 2 zinc finger occupies 140-163 (FPCPFCEAAFTSKTQLEKHRIWNH). 2 disordered regions span residues 323–473 (MVLL…RKKV) and 562–582 (EHSAKPSDAEASEGGEQEERE). Polar residues predominate over residues 371 to 384 (SMGQSSAFQLSADT). The span at 385-398 (SSGSLSPGSRPSGG) shows a compositional bias: low complexity. Ser409 is modified (phosphoserine). The segment covering 418–428 (TKHRRKQKTPK) has biased composition (basic residues). A NuRD interaction motif motif is present at residues 421–427 (RRKQKTP). Residues 540-563 (LKCQHCRKQFKSKAGLNYHTMAEH) form a C2H2-type 3 zinc finger. Residues 594-618 (LRCPQEGCGAAFSSLMGYQYHQRRC) form a C2H2-type 4; atypical zinc finger. The C2H2-type 5 zinc finger occupies 630–653 (FPCTHCGKTYRSKAGHDYHVRSEH). Positions 649-682 (VRSEHTAPPPEEPTDKSPEAEDPLGVERTPSGRV) are disordered. At Ser686 the chain carries Phosphoserine. A C2H2-type 6; atypical zinc finger spans residues 750-774 (VNCPNDCCEAIYSSVSGLKAHLASC). A C2H2-type 7 zinc finger spans residues 784–807 (YRCLLCPKEFSSESGVKYHILKTH). A disordered region spans residues 812–892 (FRTSADPPPK…KVGVSKAPEK (81 aa)). The span at 819-831 (PPKHRSQDSLVPK) shows a compositional bias: basic and acidic residues. Residues 832–849 (KEKKKNLAGGKKRGRKPK) show a composition bias toward basic residues. The segment covering 850 to 876 (ERTPEEPVAKLPPRRDDWPPGCRDKGA) has biased composition (basic and acidic residues).

This sequence belongs to the krueppel C2H2-type zinc-finger protein family. As to quaternary structure, interacts (via its NuRD interaction motif) with RBBP4 of the nucleosome remodeling and deacetylase (NuRD) complex; the interaction is direct and may play a role in repressing gene expression.

Its subcellular location is the nucleus. Its function is as follows. Involved in transcriptional regulation by repressing gene expression. Associates with the nucleosome remodeling and histone deacetylase (NuRD) complex, which promotes transcriptional repression by histone deacetylation and nucleosome remodeling. The chain is Zinc finger protein 512B (ZNF512B) from Homo sapiens (Human).